We begin with the raw amino-acid sequence, 468 residues long: UDP-N-acetylmuramate--L-alanine ligase (468 aa).

Residue 114–120 (GTHGKTT) participates in ATP binding.

Belongs to the MurCDEF family.

The protein localises to the cytoplasm. The catalysed reaction is UDP-N-acetyl-alpha-D-muramate + L-alanine + ATP = UDP-N-acetyl-alpha-D-muramoyl-L-alanine + ADP + phosphate + H(+). The protein operates within cell wall biogenesis; peptidoglycan biosynthesis. In terms of biological role, cell wall formation. This Methylorubrum extorquens (strain PA1) (Methylobacterium extorquens) protein is UDP-N-acetylmuramate--L-alanine ligase.